Consider the following 312-residue polypeptide: Ribosomal RNA small subunit methyltransferase H (312 aa).

S-adenosyl-L-methionine-binding positions include 35–37 (GGH), Asp55, Phe79, Asp100, and Gln107. A disordered region spans residues 279 to 312 (LVGKSQRPGPGEVAANPRSRSAVMRVAERTGGAA).

This sequence belongs to the methyltransferase superfamily. RsmH family.

The protein localises to the cytoplasm. It carries out the reaction cytidine(1402) in 16S rRNA + S-adenosyl-L-methionine = N(4)-methylcytidine(1402) in 16S rRNA + S-adenosyl-L-homocysteine + H(+). Specifically methylates the N4 position of cytidine in position 1402 (C1402) of 16S rRNA. The chain is Ribosomal RNA small subunit methyltransferase H from Aromatoleum aromaticum (strain DSM 19018 / LMG 30748 / EbN1) (Azoarcus sp. (strain EbN1)).